The following is a 181-amino-acid chain: Ribulose bisphosphate carboxylase small subunit 2B, chloroplastic (181 aa).

Residues 1 to 54 (MASSMFSSTAVVTSPAQATMVAPFTGLKSSASFPVTRKANNDITSITSNGGRVS) constitute a chloroplast transit peptide.

The protein belongs to the RuBisCO small chain family. As to quaternary structure, heterohexadecamer of 8 large and 8 small subunits.

The protein resides in the plastid. It is found in the chloroplast. RuBisCO catalyzes two reactions: the carboxylation of D-ribulose 1,5-bisphosphate, the primary event in carbon dioxide fixation, as well as the oxidative fragmentation of the pentose substrate. Both reactions occur simultaneously and in competition at the same active site. Although the small subunit is not catalytic it is essential for maximal activity. The polypeptide is Ribulose bisphosphate carboxylase small subunit 2B, chloroplastic (RBCS-2B) (Arabidopsis thaliana (Mouse-ear cress)).